The primary structure comprises 1444 residues: DNA polymerase III PolC-type (1444 aa).

The interval 196–218 (EAVQVMQKRQAEGQNGNSSAAPL) is disordered. Residues 207-216 (EGQNGNSSAA) show a composition bias toward polar residues. Positions 428-584 (YCVFDVETTG…FDAEATAYLA (157 aa)) constitute an Exonuclease domain.

This sequence belongs to the DNA polymerase type-C family. PolC subfamily.

It is found in the cytoplasm. It carries out the reaction DNA(n) + a 2'-deoxyribonucleoside 5'-triphosphate = DNA(n+1) + diphosphate. Functionally, required for replicative DNA synthesis. This DNA polymerase also exhibits 3' to 5' exonuclease activity. This chain is DNA polymerase III PolC-type, found in Listeria welshimeri serovar 6b (strain ATCC 35897 / DSM 20650 / CCUG 15529 / CIP 8149 / NCTC 11857 / SLCC 5334 / V8).